We begin with the raw amino-acid sequence, 414 residues long: Cytochrome P450 CYP105Q4 (414 aa).

Positions 1-12 (MSDTLASPSPET) are enriched in polar residues. The interval 1 to 21 (MSDTLASPSPETASGIPDYPM) is disordered. Residues histidine 108, glutamine 302, arginine 304, histidine 361, and cysteine 363 each contribute to the heme site.

The protein belongs to the cytochrome P450 family. Heme is required as a cofactor.

In terms of biological role, can bind oleic-acid derivatives, amphotericin B like precursors and a variety of nitrogen ligand donors. The polypeptide is Cytochrome P450 CYP105Q4 (Mycobacterium marinum (strain ATCC BAA-535 / M)).